We begin with the raw amino-acid sequence, 854 residues long: DNA mismatch repair protein MutS (854 aa).

Residue 615–622 (GPNMGGKS) coordinates ATP.

It belongs to the DNA mismatch repair MutS family.

Its function is as follows. This protein is involved in the repair of mismatches in DNA. It is possible that it carries out the mismatch recognition step. This protein has a weak ATPase activity. The sequence is that of DNA mismatch repair protein MutS from Aliivibrio fischeri (strain MJ11) (Vibrio fischeri).